Reading from the N-terminus, the 46-residue chain is Lariatin (46 aa).

The propeptide occupies 1 to 26 (MTSQPSKKTYNAPSLVQRGKFARTTA). A cross-link (isoglutamyl glycine isopeptide (Gly-Glu)) is located at residues 27–34 (GSQLVYRE).

The linear precursor LarA is probably cleaved by the putative peptidase LarD, generating linear 18-residue Lariatin-A or 20-residue Lariatin-B. These linear peptides are probably cross-linked by LarB. Finally, lariatins A and B may be exported by ABC transporter LarE.

Its function is as follows. Peptide antibiotic with selective activity against Mycobacterium species (M.smegmatis, MIC=3.13 ug/ml and M.tuberculosis, MIC=0.39 ug/ml). it is plausible that the target of lariatins lies within the cell wall in mycobacteria. Functionally, peptide antibiotic with selective activity against Mycobacterium species (M.smegmatis, MIC=6.25 ug/ml). This chain is Lariatin, found in Rhodococcus jostii.